The following is a 273-amino-acid chain: Putative phosphoenolpyruvate synthase regulatory protein (273 aa).

154-161 (GVSRSGKT) contributes to the ADP binding site.

It belongs to the pyruvate, phosphate/water dikinase regulatory protein family. PSRP subfamily.

The catalysed reaction is [pyruvate, water dikinase] + ADP = [pyruvate, water dikinase]-phosphate + AMP + H(+). The enzyme catalyses [pyruvate, water dikinase]-phosphate + phosphate + H(+) = [pyruvate, water dikinase] + diphosphate. Its function is as follows. Bifunctional serine/threonine kinase and phosphorylase involved in the regulation of the phosphoenolpyruvate synthase (PEPS) by catalyzing its phosphorylation/dephosphorylation. In Halorhodospira halophila (strain DSM 244 / SL1) (Ectothiorhodospira halophila (strain DSM 244 / SL1)), this protein is Putative phosphoenolpyruvate synthase regulatory protein.